Reading from the N-terminus, the 255-residue chain is High-affinity branched-chain amino acid transport ATP-binding protein BraF (255 aa).

Residues 6 to 254 (LEVSGLTMRF…PDVIKAYLGE (249 aa)) enclose the ABC transporter domain. 38-45 (GPNGAGKT) contacts ATP.

It belongs to the ABC transporter superfamily.

The protein localises to the cell inner membrane. Component of the high affinity leucine, isoleucine, valine, transport system (LIV-I), which is operative without Na(+) and is specific for alanine and threonine, in addition to branched-chain amino acids. In Pseudomonas aeruginosa (strain ATCC 15692 / DSM 22644 / CIP 104116 / JCM 14847 / LMG 12228 / 1C / PRS 101 / PAO1), this protein is High-affinity branched-chain amino acid transport ATP-binding protein BraF (braF).